Consider the following 469-residue polypeptide: Dynein axonemal assembly factor 3 (469 aa).

Residues 313-356 (RSPLNEDPPNTSSSCCQSTESRKTEENSQSDPSASQTQPVEHSP) are disordered. 2 stretches are compositionally biased toward polar residues: residues 320–331 (PPNTSSSCCQST) and 339–356 (NSQSDPSASQTQPVEHSP).

Belongs to the DNAAF3 family. In terms of tissue distribution, mainly expressed in cell types that express axonemal dyneins.

The protein localises to the cytoplasm. It is found in the dynein axonemal particle. In terms of biological role, required for the assembly of axonemal inner and outer dynein arms. Involved in preassembly of dyneins into complexes before their transport into cilia. This is Dynein axonemal assembly factor 3 (dnaaf3) from Danio rerio (Zebrafish).